The following is a 299-amino-acid chain: MSKTLSVDKSQLRSPWSTYWTLTKPKVVALMLLTSVVGMSLAPHEHFTWHQALIALVGIALMAGSAAAFNHLIDRRIDAKMARTYRRPLPKGDVSPFNVLLFALLIGSLGFLSLMLWVNSLTAYLTFASLLGYAAVYTLYLKRATPQNIVIAGIAGAMPPLLGWTSITGELHPHAWVLVMIIFIWTPPHFWALAIHRKEDYAKVNIPMLPVTHGVEYTKTSILLYAILLALVCMLPVLVGMASYLYLFSALVLNVCFVRYAIKLKFRAEERTAIEMFRFSIYFLLLLFCALLLDQQLAL.

Transmembrane regions (helical) follow at residues 27–47 (VVALMLLTSVVGMSLAPHEHF), 53–73 (LIALVGIALMAGSAAAFNHLI), 97–117 (FNVLLFALLIGSLGFLSLMLW), 121–141 (LTAYLTFASLLGYAAVYTLYL), 149–169 (IVIAGIAGAMPPLLGWTSITG), 175–195 (AWVLVMIIFIWTPPHFWALAI), 222–242 (ILLYAILLALVCMLPVLVGMA), 244–264 (YLYLFSALVLNVCFVRYAIKL), and 273–293 (AIEMFRFSIYFLLLLFCALLL).

This sequence belongs to the UbiA prenyltransferase family. Protoheme IX farnesyltransferase subfamily.

It is found in the cell inner membrane. The enzyme catalyses heme b + (2E,6E)-farnesyl diphosphate + H2O = Fe(II)-heme o + diphosphate. Its pathway is porphyrin-containing compound metabolism; heme O biosynthesis; heme O from protoheme: step 1/1. Its function is as follows. Converts heme B (protoheme IX) to heme O by substitution of the vinyl group on carbon 2 of heme B porphyrin ring with a hydroxyethyl farnesyl side group. The protein is Protoheme IX farnesyltransferase of Vibrio vulnificus (strain CMCP6).